The chain runs to 446 residues: MTNKPSAATGRNVVVVGTQWGDEGKGKLVDWLTEMSQGVVRFQGGHNAGHTLVINGVKTALHLIPSGIMRPGVKCYIGNGVVLSAAKLFEEIEGLEKAGVEVRSRLRISEACPLILPFHAAIDIARETFREKGGTEKIGTTGRGIGPAYEDKIARRALRVQDLKYPERFAAKLRELLELHNFVLTGFLNAPAVDFDTVYNEAMLHAELLKPMMADVSRELNDAHQAGANLLFEGAQGTLLDVDHGTYPYVTSSNCVAGNAAAGAGVGPGMLHYILGITKAYCTRVGGGPFPTELDWENPGTVGYHLSSVGAEKGVTTGRSRRCGWFDAALLKRSAQVNGLSGLCITKLDVLDGIEELKLCTGYELDGQTTDILPMGADDIARCVPIYETMPGWSQTTVGVTEYDKLPAAAQRYLQRIEEVTGVPVHMISTSPDRDHTILLRNPYAA.

Residues 21–27 (GDEGKGK) and 49–51 (GHT) each bind GTP. Catalysis depends on aspartate 22, which acts as the Proton acceptor. Positions 22 and 49 each coordinate Mg(2+). IMP is bound by residues 22-25 (DEGK), 47-50 (NAGH), threonine 141, arginine 155, glutamine 236, threonine 251, and arginine 319. Residue histidine 50 is the Proton donor of the active site. 315-321 (VTTGRSR) lines the substrate pocket. GTP is bound by residues arginine 321, 347–349 (KLD), and 429–431 (STS).

The protein belongs to the adenylosuccinate synthetase family. As to quaternary structure, homodimer. It depends on Mg(2+) as a cofactor.

The protein resides in the cytoplasm. The enzyme catalyses IMP + L-aspartate + GTP = N(6)-(1,2-dicarboxyethyl)-AMP + GDP + phosphate + 2 H(+). It participates in purine metabolism; AMP biosynthesis via de novo pathway; AMP from IMP: step 1/2. Plays an important role in the de novo pathway of purine nucleotide biosynthesis. Catalyzes the first committed step in the biosynthesis of AMP from IMP. The chain is Adenylosuccinate synthetase from Polaromonas naphthalenivorans (strain CJ2).